Consider the following 120-residue polypeptide: Large ribosomal subunit protein eL8 (120 aa).

This sequence belongs to the eukaryotic ribosomal protein eL8 family. Part of the 50S ribosomal subunit. Probably part of the RNase P complex.

It is found in the cytoplasm. Functionally, multifunctional RNA-binding protein that recognizes the K-turn motif in ribosomal RNA, the RNA component of RNase P, box H/ACA, box C/D and box C'/D' sRNAs. In Methanosarcina acetivorans (strain ATCC 35395 / DSM 2834 / JCM 12185 / C2A), this protein is Large ribosomal subunit protein eL8.